The following is a 161-amino-acid chain: NAD(P)H-quinone oxidoreductase subunit I, chloroplastic (161 aa).

2 4Fe-4S ferredoxin-type domains span residues 55–84 (GRIH…VDWK) and 95–124 (LNYS…MTEE). 8 residues coordinate [4Fe-4S] cluster: C64, C67, C70, C74, C104, C107, C110, and C114.

This sequence belongs to the complex I 23 kDa subunit family. In terms of assembly, NDH is composed of at least 16 different subunits, 5 of which are encoded in the nucleus. [4Fe-4S] cluster is required as a cofactor.

It localises to the plastid. The protein resides in the chloroplast thylakoid membrane. The enzyme catalyses a plastoquinone + NADH + (n+1) H(+)(in) = a plastoquinol + NAD(+) + n H(+)(out). It carries out the reaction a plastoquinone + NADPH + (n+1) H(+)(in) = a plastoquinol + NADP(+) + n H(+)(out). NDH shuttles electrons from NAD(P)H:plastoquinone, via FMN and iron-sulfur (Fe-S) centers, to quinones in the photosynthetic chain and possibly in a chloroplast respiratory chain. The immediate electron acceptor for the enzyme in this species is believed to be plastoquinone. Couples the redox reaction to proton translocation, and thus conserves the redox energy in a proton gradient. This chain is NAD(P)H-quinone oxidoreductase subunit I, chloroplastic, found in Phaseolus vulgaris (Kidney bean).